Consider the following 363-residue polypeptide: MTKTYHIAVLPGDGIGPEVMAQASKVLDAVRQRFGLKISTSVYDVGGAAIDRHGSPLPAATVAGCEQADAILFGSVGGPKWEHLPPAEQPERGALLPLRKHFKLFSNLRPARLYQGLEDFCPLRSDIAARGFDILCVRELTGGIYFGQPKGREGQGMHERAFDTEVYHRFEIERIARIAFESARKRRSKVTSIDKANVLQSSILWREVVNGIAADYPDVALSHMYIDNATMQLIKDPSQFDVLLCSNLFGDILSDECAMITGSMGMLPSASLNEQGFGLYEPAGGSAPDIAGKNIANPIAQILSLTLLLRFSLGKDDAADAIERAINQALEQGYRTADLAGDGHAIGTHEMGDIIAKFVVEGV.

78 to 91 (GPKWEHLPPAEQPE) contacts NAD(+). Positions 99, 109, 138, and 227 each coordinate substrate. Positions 227, 251, and 255 each coordinate Mg(2+). Residue 285–297 (GSAPDIAGKNIAN) coordinates NAD(+).

Belongs to the isocitrate and isopropylmalate dehydrogenases family. LeuB type 1 subfamily. In terms of assembly, homodimer. Mg(2+) is required as a cofactor. The cofactor is Mn(2+).

The protein localises to the cytoplasm. It catalyses the reaction (2R,3S)-3-isopropylmalate + NAD(+) = 4-methyl-2-oxopentanoate + CO2 + NADH. It functions in the pathway amino-acid biosynthesis; L-leucine biosynthesis; L-leucine from 3-methyl-2-oxobutanoate: step 3/4. Functionally, catalyzes the oxidation of 3-carboxy-2-hydroxy-4-methylpentanoate (3-isopropylmalate) to 3-carboxy-4-methyl-2-oxopentanoate. The product decarboxylates to 4-methyl-2 oxopentanoate. This is 3-isopropylmalate dehydrogenase from Yersinia pestis.